Reading from the N-terminus, the 571-residue chain is CDT1-like protein a, chloroplastic (571 aa).

Residues 1-79 (MSTPGSSRSI…GSRRRSEDPV (79 aa)) constitute a chloroplast transit peptide. 2 disordered regions span residues 1 to 110 (MSTP…EKEK) and 288 to 315 (TTSSLAKPTSSQINIAPTPTKPTSTPAK). Residues 22–38 (SPSSKSQTGNPNPSSVA) are compositionally biased toward polar residues. Over residues 81-96 (SSAKSRLFFDSSSSSP) the composition is skewed to low complexity. The span at 288–302 (TTSSLAKPTSSQINI) shows a compositional bias: polar residues. A compositionally biased stretch (low complexity) spans 303–315 (APTPTKPTSTPAK).

It belongs to the Cdt1 family. Binds to ARC6. Post-translationally, phosphorylated by cyclin D- and cyclin A-containing CDKA-1, and thus targeted to proteasome-mediated proteolysis. In terms of tissue distribution, expressed in proliferating (e.g. shoot and root apical meristems, organ primordia) and endoreplicating cells (e.g. guard cells and stomatal lineage, developing trichomes).

Its subcellular location is the plastid. It is found in the chloroplast. Member of the pre-replication complex. Component of the plastid division machinery. Promotes polyloidization and regulates endoreduplication. Involved in the coordination of cell and plastid division. This chain is CDT1-like protein a, chloroplastic (CDT1A), found in Arabidopsis thaliana (Mouse-ear cress).